Here is a 489-residue protein sequence, read N- to C-terminus: Rhamnulokinase (489 aa).

ATP is bound at residue 13–17; it reads ASSGR. A disulfide bridge links Cys68 with Cys222. Substrate-binding positions include Gly83 and 236 to 238; that span reads HDT. Asp237 acts as the Proton acceptor in catalysis. An ATP-binding site is contributed by Thr259. Substrate is bound at residue Asn296. Gln304 contributes to the ATP binding site. Residues Cys353 and Cys370 are joined by a disulfide bond. Residue Gly402 participates in ATP binding. A disulfide bridge links Cys413 with Cys417.

It belongs to the rhamnulokinase family. As to quaternary structure, monomer. It depends on Mg(2+) as a cofactor.

It carries out the reaction L-rhamnulose + ATP = L-rhamnulose 1-phosphate + ADP + H(+). Its pathway is carbohydrate degradation; L-rhamnose degradation; glycerone phosphate from L-rhamnose: step 2/3. In terms of biological role, involved in the catabolism of L-rhamnose (6-deoxy-L-mannose). Catalyzes the transfer of the gamma-phosphate group from ATP to the 1-hydroxyl group of L-rhamnulose to yield L-rhamnulose 1-phosphate. In Escherichia coli (strain 55989 / EAEC), this protein is Rhamnulokinase.